A 595-amino-acid polypeptide reads, in one-letter code: MSHIRNFSIIAHIDHGKSTLADRFIQMCGGLSEREMEAQVLDSMDLERERGITIKAHSVTLYYKAKDGITYQLNFIDTPGHVDFTYEVSRSLAACEGALLVVDAGQGVEAQSVANCYTAIEQGLEVMPVLNKMDLPQADPDRVKEEIEKIIGIDATDAVACSAKSGMGVDEVLERLVATIPAPTGNIEDPLQALIIDSWFDNYLGVVSLVRVRHGRVKKGDKILVKSTGKLHLVDSVGVFNPKHTATVDLKAGEVGFIIAGIKDIHGAPVGDTLTLSTTPDVDVLPGFKRIQPQVYAGLFPVSSDDFEDFREALQKLTLNDSSLQYLPESSDALGFGFRCGFLGMLHMEIIQERLEREYNLDLITTAPTVIFELLLKTGETIYVDNPSKLPDLSSIEDMREPIVRANILVPQEHLGNVITLCIEKRGVQHDMLFLGTQVQVSYDLPMNEVVLDFFDRLKSVSRGYASLDYHFDRYQSANLVKLDVLINAEKVDALALIVHRDNAHYKGRALTEKMKELIPRQMFDVAIQAAIGGQIVARTTVKALRKNVLAKCYGGDVSRKRKLLEKQKAGKKRMKQVGNVEIPQEAFLAVLRLE.

The 183-residue stretch at 2–184 (SHIRNFSIIA…RLVATIPAPT (183 aa)) folds into the tr-type G domain. GTP contacts are provided by residues 14–19 (DHGKST) and 131–134 (NKMD).

This sequence belongs to the TRAFAC class translation factor GTPase superfamily. Classic translation factor GTPase family. LepA subfamily.

It is found in the cell inner membrane. The enzyme catalyses GTP + H2O = GDP + phosphate + H(+). In terms of biological role, required for accurate and efficient protein synthesis under certain stress conditions. May act as a fidelity factor of the translation reaction, by catalyzing a one-codon backward translocation of tRNAs on improperly translocated ribosomes. Back-translocation proceeds from a post-translocation (POST) complex to a pre-translocation (PRE) complex, thus giving elongation factor G a second chance to translocate the tRNAs correctly. Binds to ribosomes in a GTP-dependent manner. The sequence is that of Elongation factor 4 from Pseudomonas savastanoi pv. phaseolicola (strain 1448A / Race 6) (Pseudomonas syringae pv. phaseolicola (strain 1448A / Race 6)).